A 501-amino-acid polypeptide reads, in one-letter code: Probable cytosol aminopeptidase (501 aa).

Residues Lys-268 and Asp-273 each contribute to the Mn(2+) site. Residue Lys-280 is part of the active site. Mn(2+) is bound by residues Asp-291, Asp-350, and Glu-352. Residue Arg-354 is part of the active site.

Belongs to the peptidase M17 family. Requires Mn(2+) as cofactor.

Its subcellular location is the cytoplasm. It catalyses the reaction Release of an N-terminal amino acid, Xaa-|-Yaa-, in which Xaa is preferably Leu, but may be other amino acids including Pro although not Arg or Lys, and Yaa may be Pro. Amino acid amides and methyl esters are also readily hydrolyzed, but rates on arylamides are exceedingly low.. It carries out the reaction Release of an N-terminal amino acid, preferentially leucine, but not glutamic or aspartic acids.. Presumably involved in the processing and regular turnover of intracellular proteins. Catalyzes the removal of unsubstituted N-terminal amino acids from various peptides. The chain is Probable cytosol aminopeptidase from Idiomarina loihiensis (strain ATCC BAA-735 / DSM 15497 / L2-TR).